A 575-amino-acid polypeptide reads, in one-letter code: Chaperonin 60 subunit alpha 2, chloroplastic (575 aa).

Residues 1–18 (MFAVSPSSFSPTTISPRR) are compositionally biased toward low complexity. The tract at residues 1 to 27 (MFAVSPSSFSPTTISPRRSGQRNEPRK) is disordered. A chloroplast-targeting transit peptide spans 1–32 (MFAVSPSSFSPTTISPRRSGQRNEPRKFSVVR).

This sequence belongs to the chaperonin (HSP60) family. Part of the Cpn60 complex composed of 7 alpha and 7 beta subunits.

It is found in the plastid. Its subcellular location is the chloroplast. Its function is as follows. Involved in protein assisted folding. This is Chaperonin 60 subunit alpha 2, chloroplastic (CPN60A2) from Arabidopsis thaliana (Mouse-ear cress).